A 1255-amino-acid polypeptide reads, in one-letter code: ATP-binding cassette sub-family B member 5 (1255 aa).

A helical membrane pass occupies residues 46-66 (IVLMTLGILASMINGATVPLM). The ABC transmembrane type-1 1 domain maps to 51–351 (LGILASMING…SVAPHLETFT (301 aa)). N-linked (GlcNAc...) asparagine glycosylation is found at Asn-86 and Asn-92. A helical membrane pass occupies residues 104–124 (IIVLTLYYIGIGAAALIFGYV). Asn-189 carries an N-linked (GlcNAc...) asparagine glycan. 2 helical membrane-spanning segments follow: residues 290 to 310 (LSLG…FWYG) and 314 to 334 (IFGG…FSVI). Asn-372 and Asn-391 each carry an N-linked (GlcNAc...) asparagine glycan. The ABC transporter 1 domain occupies 387–623 (IEFKNVSFSY…QGLYYSLAMA (237 aa)). Residue 422-429 (GPSGSGKS) participates in ATP binding. A glycan (N-linked (GlcNAc...) asparagine) is linked at Asn-643. Transmembrane regions (helical) follow at residues 694-714 (VLGT…SIIF) and 738-758 (MMLV…GLFY). Residues 694-981 (VLGTLASALN…TLVWAPEYSK (288 aa)) form the ABC transmembrane type-1 2 domain. Residue Asn-790 is glycosylated (N-linked (GlcNAc...) asparagine). A run of 3 helical transmembrane segments spans residues 814–836 (LGIV…IYGW), 841–863 (LILS…MAGF), and 955–975 (MFIV…TLVW). In terms of domain architecture, ABC transporter 2 spans 1016–1254 (LEFREVSFVY…GDTYFKLVAA (239 aa)). N-linked (GlcNAc...) asparagine glycosylation occurs at Asn-1036. Residue 1051 to 1058 (GSSGCGKS) coordinates ATP. Asn-1105, Asn-1189, and Asn-1229 each carry an N-linked (GlcNAc...) asparagine glycan.

Belongs to the ABC transporter superfamily. ABCB family. Multidrug resistance exporter (TC 3.A.1.201) subfamily. In developing eye, expressed in basal limbal epithelium but not in central cornea. Acts as a marker of limbal stem cells.

Its subcellular location is the cell membrane. The catalysed reaction is daunorubicin(in) + ATP + H2O = daunorubicin(out) + ADP + phosphate + H(+). Energy-dependent efflux transporter responsible for decreased drug accumulation in multidrug-resistant cells. Specifically present in limbal stem cells, where it plays a key role in corneal development and repair. In Mus musculus (Mouse), this protein is ATP-binding cassette sub-family B member 5.